The sequence spans 206 residues: Ras-related protein RABG3d (206 aa).

15 to 22 (GDSGVGKT) contacts GTP. Positions 37-45 (YKATIGADF) match the Effector region motif. Residues 63 to 67 (DTAGQ), 125 to 128 (NKTD), and 158 to 159 (SA) contribute to the GTP site. S-geranylgeranyl cysteine attachment occurs at residues Cys204 and Cys206. Position 206 is a cysteine methyl ester (Cys206).

Belongs to the small GTPase superfamily. Rab family.

The protein resides in the cell membrane. Its function is as follows. Intracellular vesicle trafficking and protein transport. The polypeptide is Ras-related protein RABG3d (RABG3D) (Arabidopsis thaliana (Mouse-ear cress)).